We begin with the raw amino-acid sequence, 850 residues long: Translation initiation factor IF-2 (850 aa).

2 disordered regions span residues 50–72 (LKSS…KTTS) and 92–267 (FVQR…TGPV). A compositionally biased stretch (basic and acidic residues) spans 96–135 (SPEEIQAEQKREQEERRAAENAAREKADADARQRNEEQAR). The segment covering 136–172 (RQAAQAPAAAPVAKAEPAPAAAAPAAPAVPDAPVSED) has biased composition (low complexity). Basic and acidic residues-rich tracts occupy residues 173-210 (AAAR…RGEA) and 234-243 (TTDEESDGFR). A compositionally biased stretch (basic residues) spans 244 to 257 (RGRGGKGKPKKRNQ). The region spanning 350 to 517 (SRAPVVTVMG…AVLLQAEILE (168 aa)) is the tr-type G domain. The segment at 359 to 366 (GHVDHGKT) is G1. 359 to 366 (GHVDHGKT) provides a ligand contact to GTP. The interval 384–388 (GITQH) is G2. The segment at 405-408 (DTPG) is G3. GTP contacts are provided by residues 405-409 (DTPGH) and 459-462 (NKID). Residues 459 to 462 (NKID) are G4. The tract at residues 495 to 497 (SAK) is G5.

It belongs to the TRAFAC class translation factor GTPase superfamily. Classic translation factor GTPase family. IF-2 subfamily.

Its subcellular location is the cytoplasm. One of the essential components for the initiation of protein synthesis. Protects formylmethionyl-tRNA from spontaneous hydrolysis and promotes its binding to the 30S ribosomal subunits. Also involved in the hydrolysis of GTP during the formation of the 70S ribosomal complex. The sequence is that of Translation initiation factor IF-2 from Pseudomonas entomophila (strain L48).